A 330-amino-acid chain; its full sequence is Deoxyhypusine hydroxylase (330 aa).

3 HEAT-like PBS-type repeats span residues 57–83 (LKHE…VLRN), 90–116 (VRHE…YLSD), and 199–225 (ERYR…GFSG). Fe cation contacts are provided by histidine 59, glutamate 60, histidine 92, and glutamate 93. The Fe cation site is built by histidine 232, glutamate 233, histidine 265, and glutamate 266. One copy of the HEAT-like PBS-type 4 repeat lies at 263–289 (VRHEAAEALGGIATPEVLPPLKEWVAR).

Belongs to the deoxyhypusine hydroxylase family. Fe(2+) serves as cofactor.

The protein localises to the cytoplasm. The protein resides in the nucleus. It catalyses the reaction [eIF5A protein]-deoxyhypusine + AH2 + O2 = [eIF5A protein]-hypusine + A + H2O. It participates in protein modification; eIF5A hypusination. Catalyzes the hydroxylation of the N(6)-(4-aminobutyl)-L-lysine intermediate to form hypusine, an essential post-translational modification only found in mature eIF-5A factor. The sequence is that of Deoxyhypusine hydroxylase from Lentinula edodes (Shiitake mushroom).